We begin with the raw amino-acid sequence, 123 residues long: Small ribosomal subunit protein uS12 (123 aa).

A disordered region spans residues 1 to 22 (MATINQLVRQPRKRSVEKSDVP). A 3-methylthioaspartic acid modification is found at D89. Positions 100-123 (GSLDTSGVKGRNQGRSKYGTKRPK) are disordered. Basic residues predominate over residues 111–123 (NQGRSKYGTKRPK).

Belongs to the universal ribosomal protein uS12 family. As to quaternary structure, part of the 30S ribosomal subunit. Contacts proteins S8 and S17. May interact with IF1 in the 30S initiation complex.

Its function is as follows. With S4 and S5 plays an important role in translational accuracy. Functionally, interacts with and stabilizes bases of the 16S rRNA that are involved in tRNA selection in the A site and with the mRNA backbone. Located at the interface of the 30S and 50S subunits, it traverses the body of the 30S subunit contacting proteins on the other side and probably holding the rRNA structure together. The combined cluster of proteins S8, S12 and S17 appears to hold together the shoulder and platform of the 30S subunit. The polypeptide is Small ribosomal subunit protein uS12 (Pseudomonas putida (strain GB-1)).